Reading from the N-terminus, the 251-residue chain is E3 ubiquitin-protein ligase Os06g0535400 (251 aa).

The next 3 membrane-spanning stretches (helical) occupy residues V28–A48, L102–F122, and A127–S147. Residues C185–R227 form an RING-type; atypical zinc finger.

The protein localises to the membrane. The enzyme catalyses S-ubiquitinyl-[E2 ubiquitin-conjugating enzyme]-L-cysteine + [acceptor protein]-L-lysine = [E2 ubiquitin-conjugating enzyme]-L-cysteine + N(6)-ubiquitinyl-[acceptor protein]-L-lysine.. It functions in the pathway protein modification; protein ubiquitination. In terms of biological role, possesses E3 ubiquitin-protein ligase in vitro. This is E3 ubiquitin-protein ligase Os06g0535400 from Oryza sativa subsp. japonica (Rice).